A 521-amino-acid polypeptide reads, in one-letter code: MQSLSRRKRDSVPNLYAKCQLSGNCLPDVKNKVEADTLADRLLRWLGSVIYLGGLGIGTGRGSGGSTGYNPIGAPSRVTPSGTLVRPTVPVESLGPSEIIPIDAIDPTTSSVVPLEDLTIPDVTVDSGDTRGIGETTLQPAQVDISTSHDPISDVTGASSHPTIISGEDNAIAVLDVSPIEPPTKRIALATRGASATPHVSVISGTTEFGQSSDLNVFVNATFSGDSIGYTEEIPLEPLNPFQEFEIESPPKTSTPRDVLNRAIGRARDLYNRRVQQIPTRNPALLTQPSRAIVFGFENPAFDADITQTFERDLEQVAAAPDADFADIVTIGRPRFSETDAGQIRVSRLGRRGTIKTRSGVQIGQAVHFYYDLSTIDTADAIELSTLGQHSGEQSIVDAMIESSLIDPFEMPDPTFTEEQQLLDPLTEDFSQSHLVLTSSRRGTSFTIPTIPPGLGLRIYVDDVGSDLFVSYPESRVIPAGGLPTEPFVPLEPALLSDIFSTDFVYRPSLYRKKRKRLEMF.

A Nuclear localization signal motif is present at residues 1-10 (MQSLSRRKRD). A disulfide bridge links Cys19 with Cys25. The Nuclear localization signal motif lies at 512–518 (RKKRKRL).

The protein belongs to the papillomaviridae L2 protein family. As to quaternary structure, interacts with major capsid protein L1. Interacts with E2; this interaction inhibits E2 transcriptional activity but not the DNA replication function E2. Interacts with host GADD45GIP1. Interacts with host HSPA8; this interaction is required for L2 nuclear translocation. Interacts with host importins KPNB2 and KPNB3. Forms a complex with importin alpha2-beta1 heterodimers via interaction with the importin alpha2 adapter. Interacts with host DYNLT1; this interaction is essential for virus intracellular transport during entry. Interacts (via C-terminus) with host retromer subunits VPS35 and VPS29. In terms of processing, highly phosphorylated.

The protein localises to the virion. Its subcellular location is the host nucleus. It localises to the host early endosome. It is found in the host Golgi apparatus. Minor protein of the capsid that localizes along the inner surface of the virion, within the central cavities beneath the L1 pentamers. Plays a role in capsid stabilization through interaction with the major capsid protein L1. Once the virion enters the host cell, L2 escorts the genomic DNA into the nucleus by promoting escape from the endosomal compartments and traffic through the host Golgi network. Mechanistically, the C-terminus of L2 possesses a cell-penetrating peptide that protudes from the host endosome, interacts with host cytoplasmic retromer cargo and thereby mediates the capsid delivery to the host trans-Golgi network. Plays a role through its interaction with host dynein in the intracellular microtubule-dependent transport of viral capsid toward the nucleus. Mediates the viral genome import into the nucleus through binding to host importins. Once within the nucleus, L2 localizes viral genomes to host PML bodies in order to activate early gene expression for establishment of infection. Later on, promotes late gene expression by interacting with the viral E2 protein and by inhibiting its transcriptional activation functions. During virion assembly, encapsidates the genome by direct interaction with the viral DNA. This Human papillomavirus 4 protein is Minor capsid protein L2.